The chain runs to 121 residues: Basic phospholipase A2 homolog textilotoxin B chain (121 aa).

Cystine bridges form between C11/C72, C27/C120, C29/C45, C44/C101, C51/C94, C61/C87, and C80/C92.

It belongs to the phospholipase A2 family. Group I subfamily. N49 sub-subfamily. In terms of assembly, heterohexamer. 2 forms exist: 2 A or 2 B chains, 2 C chains and 2 covalently-linked D chains, and 1 A or 1 B, 1 C, 2 covalently-linked D chains and 2 differentially glycosylated covalently-linked D chains. Textilotoxin was originally described as pentameric. In terms of tissue distribution, expressed by the venom gland.

The protein localises to the secreted. Snake venom oligomeric phospholipase A2 that has potent presynaptic neurotoxicity. Chain B is not itself neurotoxic, but it is essential for the neurotoxicity of textilotoxin. Subunit B possesses a very low phospholipase activity. This is Basic phospholipase A2 homolog textilotoxin B chain from Pseudonaja textilis (Eastern brown snake).